We begin with the raw amino-acid sequence, 131 residues long: UPF0102 protein CYA_0708 (131 aa).

This sequence belongs to the UPF0102 family.

The protein is UPF0102 protein CYA_0708 of Synechococcus sp. (strain JA-3-3Ab) (Cyanobacteria bacterium Yellowstone A-Prime).